The primary structure comprises 232 residues: Endonuclease NucS (232 aa).

The protein belongs to the NucS endonuclease family.

It is found in the cytoplasm. Its function is as follows. Cleaves both 3' and 5' ssDNA extremities of branched DNA structures. This chain is Endonuclease NucS, found in Mycobacteroides abscessus (strain ATCC 19977 / DSM 44196 / CCUG 20993 / CIP 104536 / JCM 13569 / NCTC 13031 / TMC 1543 / L948) (Mycobacterium abscessus).